A 141-amino-acid polypeptide reads, in one-letter code: Large ribosomal subunit protein uL11 (141 aa).

The protein belongs to the universal ribosomal protein uL11 family. Part of the ribosomal stalk of the 50S ribosomal subunit. Interacts with L10 and the large rRNA to form the base of the stalk. L10 forms an elongated spine to which L12 dimers bind in a sequential fashion forming a multimeric L10(L12)X complex. In terms of processing, one or more lysine residues are methylated.

Functionally, forms part of the ribosomal stalk which helps the ribosome interact with GTP-bound translation factors. This is Large ribosomal subunit protein uL11 from Chloroflexus aurantiacus (strain ATCC 29366 / DSM 635 / J-10-fl).